Here is a 401-residue protein sequence, read N- to C-terminus: Acetylornithine aminotransferase (401 aa).

Pyridoxal 5'-phosphate contacts are provided by residues 121–122 and Phe154; that span reads GA. Arg157 lines the N(2)-acetyl-L-ornithine pocket. 239-242 is a pyridoxal 5'-phosphate binding site; that stretch reads DEVQ. The residue at position 268 (Lys268) is an N6-(pyridoxal phosphate)lysine. Ser296 contributes to the N(2)-acetyl-L-ornithine binding site. Thr297 contacts pyridoxal 5'-phosphate.

It belongs to the class-III pyridoxal-phosphate-dependent aminotransferase family. ArgD subfamily. Homodimer. Pyridoxal 5'-phosphate is required as a cofactor.

It is found in the cytoplasm. It carries out the reaction N(2)-acetyl-L-ornithine + 2-oxoglutarate = N-acetyl-L-glutamate 5-semialdehyde + L-glutamate. It participates in amino-acid biosynthesis; L-arginine biosynthesis; N(2)-acetyl-L-ornithine from L-glutamate: step 4/4. The chain is Acetylornithine aminotransferase from Myxococcus xanthus.